The sequence spans 84 residues: Limulin (84 aa).

Residues 6–84 enclose the Pentraxin (PTX) domain; that stretch reads ITSKVKFPPS…DEQGDFLFNV (79 aa). Positions 67 and 68 each coordinate Ca(2+).

It belongs to the pentraxin family. As to quaternary structure, homopentamer. Pentraxin (or pentaxin) have a discoid arrangement of 5 non-covalently bound subunits. Ca(2+) serves as cofactor. In terms of processing, a disulfide bond links Cys-38 to a Cys in the C-terminal half of the chain of 163 residues.

Its function is as follows. Lectin that binds sialic acid. Displays antiviral activity and therefore may contribute to defense against infections. The polypeptide is Limulin (Limulus polyphemus (Atlantic horseshoe crab)).